We begin with the raw amino-acid sequence, 1040 residues long: Multidrug resistance protein MdtB (1040 aa).

The next 12 membrane-spanning stretches (helical) occupy residues 25–45, 347–367, 369–389, 396–416, 440–460, 472–492, 537–557, 869–889, 890–910, 911–931, 968–988, and 998–1018; these read LLMA…PVAA, LMLA…NIPA, IIPG…MVFL, LTLM…IVVI, IGFT…PLLF, FAVT…TLTP, WLTL…WIVI, LIVA…ESFI, HPIT…LALM, IAGS…IGIV, ILMT…STGV, and IAMV…TPVI.

This sequence belongs to the resistance-nodulation-cell division (RND) (TC 2.A.6) family. MdtB subfamily. As to quaternary structure, part of a tripartite efflux system composed of MdtA, MdtB and MdtC. MdtB forms a heteromultimer with MdtC.

It localises to the cell inner membrane. In Salmonella arizonae (strain ATCC BAA-731 / CDC346-86 / RSK2980), this protein is Multidrug resistance protein MdtB.